Here is a 60-residue protein sequence, read N- to C-terminus: Large ribosomal subunit protein bL32 (60 aa).

This sequence belongs to the bacterial ribosomal protein bL32 family.

The chain is Large ribosomal subunit protein bL32 from Pseudothermotoga lettingae (strain ATCC BAA-301 / DSM 14385 / NBRC 107922 / TMO) (Thermotoga lettingae).